Here is a 1959-residue protein sequence, read N- to C-terminus: Myosin-9 (1959 aa).

In terms of domain architecture, Myosin N-terminal SH3-like spans Ala-27–Pro-77. The region spanning Ser-81–Asp-776 is the Myosin motor domain. Gly-174–Thr-181 is an ATP binding site. Residues Leu-654 to His-676 are actin-binding. The 30-residue stretch at Ile-779–Ala-808 folds into the IQ domain. The stretch at Leu-837–Leu-1925 forms a coiled coil. Disordered regions lie at residues Glu-1118–Glu-1168, Arg-1694–Gly-1717, Leu-1879–Lys-1917, and Lys-1936–Glu-1959. Basic and acidic residues-rich tracts occupy residues Ser-1122–Leu-1148 and Arg-1694–Asp-1704. Residues Asp-1947–Glu-1959 are compositionally biased toward basic and acidic residues.

This sequence belongs to the TRAFAC class myosin-kinesin ATPase superfamily. Myosin family. In terms of assembly, myosin is a hexameric protein that consists of 2 heavy chain subunits (MHC), 2 alkali light chain subunits (MLC) and 2 regulatory light chain subunits (MLC-2). As to expression, expressed in fibroblasts, brain, lung, kidney, spleen, and skeletal, cardiac and smooth muscles.

The protein localises to the cytoplasm. It localises to the cytoskeleton. Its subcellular location is the cell cortex. It is found in the cytoplasmic vesicle. The protein resides in the secretory vesicle. The protein localises to the cortical granule. Cellular myosin that appears to play a role in cytokinesis, cell shape, and specialized functions such as secretion and capping. The protein is Myosin-9 (MYH9) of Gallus gallus (Chicken).